The chain runs to 486 residues: 23S rRNA (uracil(1939)-C(5))-methyltransferase RlmD (486 aa).

The TRAM domain occupies 10 to 71 (TVKAPEYLPD…SSFEKAVVMA (62 aa)). 4 residues coordinate [4Fe-4S] cluster: Cys84, Cys94, Cys97, and Cys176. 6 residues coordinate S-adenosyl-L-methionine: Gln285, Phe314, Asn319, Glu335, Asn370, and Asp391. The Nucleophile role is filled by Cys442.

It belongs to the class I-like SAM-binding methyltransferase superfamily. RNA M5U methyltransferase family. RlmD subfamily.

The catalysed reaction is uridine(1939) in 23S rRNA + S-adenosyl-L-methionine = 5-methyluridine(1939) in 23S rRNA + S-adenosyl-L-homocysteine + H(+). Catalyzes the formation of 5-methyl-uridine at position 1939 (m5U1939) in 23S rRNA. This is 23S rRNA (uracil(1939)-C(5))-methyltransferase RlmD from Polaromonas sp. (strain JS666 / ATCC BAA-500).